The chain runs to 146 residues: Urease accessory protein UreE 1 (146 aa).

This sequence belongs to the UreE family.

It is found in the cytoplasm. Functionally, involved in urease metallocenter assembly. Binds nickel. Probably functions as a nickel donor during metallocenter assembly. The protein is Urease accessory protein UreE 1 of Pseudomonas syringae pv. tomato (strain ATCC BAA-871 / DC3000).